Reading from the N-terminus, the 487-residue chain is L-tartrate/succinate antiporter (487 aa).

Transmembrane regions (helical) follow at residues 10-30, 33-53, 54-74, 93-113, 137-157, 189-209, 230-250, 292-312, 313-333, 340-360, 370-390, 393-413, 418-438, and 465-485; these read YLAPLAVIAIIALIPVPAGLE, TWLYFAVFTGVIVGLILEPVP, GAVVAMVGISIIAILSPWLLF, WAVSGFSNSVIWLIFAAFMFG, TLFLGYAVMFSELILAPVTPS, IGSYIMWIGIVADCVTSAIFL, LSWGDWFLGMLPLSILLVLLV, LMVGALVLWIFGGDYIDAAMV, GYSVVALMLLLRIISWDDIVS, VFFWLASLITLATGLNNTGFI, SLSGYSPTMVMVALIVVFYLL, FFASATAYTSALAPMMIAAAL, IPLPVFCLMVGAAIGLGSILT, and IFGLIFLVLLVITGLLWMPVV.

The protein belongs to the SLC13A/DASS transporter (TC 2.A.47) family. DIT1 subfamily.

It localises to the cell inner membrane. The catalysed reaction is (2R,3R)-tartrate(out) + succinate(in) = (2R,3R)-tartrate(in) + succinate(out). In terms of biological role, catalyzes the uptake of tartrate in exchange for intracellular succinate. Essential for anaerobic L-tartrate fermentation. The polypeptide is L-tartrate/succinate antiporter (ttdT) (Shigella dysenteriae serotype 1 (strain Sd197)).